The primary structure comprises 251 residues: Cell division protein ZapD (251 aa).

This sequence belongs to the ZapD family. Interacts with FtsZ.

It is found in the cytoplasm. Functionally, cell division factor that enhances FtsZ-ring assembly. Directly interacts with FtsZ and promotes bundling of FtsZ protofilaments, with a reduction in FtsZ GTPase activity. The polypeptide is Cell division protein ZapD (Burkholderia cenocepacia (strain HI2424)).